Consider the following 337-residue polypeptide: Vacuolar protein sorting-associated protein 26B-B (337 aa).

The tract at residues 313 to 337 is disordered; that stretch reads RFEGTSHPETRPQHSGAAALEQEHE.

The protein belongs to the VPS26 family. Component of the heterotrimeric retromer cargo-selective complex (CSC) which is believed to associate with variable sorting nexins to form functionally distinct retromer complex variants.

It localises to the cytoplasm. The protein resides in the membrane. It is found in the endosome. Functionally, acts as a component of the retromer cargo-selective complex (CSC). The CSC is believed to be the core functional component of retromer or respective retromer complex variants acting to prevent missorting of selected transmembrane cargo proteins into the lysosomal degradation pathway. Retromer mediates retrograde transport of cargo proteins from endosomes to the trans-Golgi network (TGN). This is Vacuolar protein sorting-associated protein 26B-B (vps26b-b) from Xenopus laevis (African clawed frog).